Here is an 833-residue protein sequence, read N- to C-terminus: Enhancer of filamentation 1 (833 aa).

One can recognise an SH3 domain in the interval 3–65 (ARNLMARALY…PGNRVKLLIG (63 aa)). 7 positions are modified to phosphotyrosine: Y91, Y163, Y165, Y176, Y188, Y213, and Y222. The tract at residues 237–258 (EKEYDFPPPMKQDGKPDTRPEG) is disordered. Over residues 248–258 (QDGKPDTRPEG) the composition is skewed to basic and acidic residues. S295 carries the post-translational modification Phosphoserine. 3 disordered regions span residues 297–316 (SLHH…SDAY), 326–403 (EVPT…RLRL), and 560–623 (PANS…SERS). The segment covering 304–314 (QLGQSGDTQSD) has biased composition (polar residues). At Y316 the chain carries Phosphotyrosine. Residues 331–343 (TSEKANPEERDGV) show a composition bias toward basic and acidic residues. An interacts with CTTN region spans residues 350–833 (NPADAKGSRD…KRSLLEMATF (484 aa)). Positions 359-362 (DVVD) match the Caspase cleavage related site motif. S368 carries the phosphoserine modification. Residues 368–396 (SFSSTGSTRSNMSTSSTSSKESSLSASPS) are compositionally biased toward low complexity. The span at 564-586 (HLKNGPNSIMNSSEYTHPGSQMQ) shows a compositional bias: polar residues. The segment at 709-759 (FYYDQCETHFISLLNAIDALFSCVSSAQPPRIFVAHSKFVILSAHKLVFIG) is divergent helix-loop-helix motif. Positions 709-833 (FYYDQCETHF…KRSLLEMATF (125 aa)) are required for interaction with PLK1. Residue S779 is modified to Phosphoserine. T803 is modified (phosphothreonine).

Belongs to the CAS family. As to quaternary structure, homodimer. Forms heterodimers with BCAR1/p130cas. Forms complexes with PTK2B/RAFTK, adapter protein CRKL and LYN kinase. Part of a complex composed of NEDD9, AURKA and CTTN; within the complex NEDD9 acts as a scaffold protein and is required for complex formation. Part of a ternary complex composed of SMAD3, ITCH/AIP4 and NEDD9/HEF1; within the complex NEDD9/HEF1 interacts (via N-terminus) with ITCH/AIP4 (via WW domains); the complex mediates ubiquitination and proteasomal degradation of NEDD9/HEF1. Interacts with SMAD3; the interaction promotes NEDD9 ubiquitination and proteasomal degradation. Interacts with ID2. Interacts with CTTN (via N-terminus). Interacts with MICAL. Interacts with TXNL4/DIM1. Interacts with BCAR3 (via Ras-GEF domain). Interacts with SH2D3C isoform 1 and isoform 2. Interacts with ECT2. Interacts with PTPN11/SHP-2 (via SH2 domains); the interaction is enhanced when NEDD9/CAS-L is tyrosine phosphorylated. Interacts (via C-terminus) with PLK1 (via polo box domains). Interacts with NKX2-5. Interacts with SMAD3; the interaction is inhibited by oxidation of NEDD9. Interacts with NEDD9/HEF1; interaction is induced by CXCL12 promotion of ABL-mediated phosphorylation of NEDD9/HEF1. Interacts (via SH3 domain) with PTK2/FAK. Interacts with FYN; in the presence of PTK2. Interacts with INPPL1/SHIP2. Post-translationally, polyubiquitinated by ITCH/AIP4, leading to proteasomal degradation. PTK2/FAK1 phosphorylates the protein at the YDYVHL motif (conserved among all cas proteins) following integrin stimulation. The SRC family kinases (FYN, SRC, LCK and CRK) are recruited to the phosphorylated sites and can phosphorylate other tyrosine residues. Ligation of either integrin beta-1 or B-cell antigen receptor on tonsillar B-cells and B-cell lines promotes tyrosine phosphorylation and both integrin and BCR-mediated tyrosine phosphorylation requires an intact actin network. Phosphorylation is required to recruit NEDD9 to T-cell receptor microclusters at the periphery of newly formed immunological synapses. In fibroblasts transformation with oncogene v-ABL results in an increase in tyrosine phosphorylation. Transiently phosphorylated following CD3 cross-linking and this phosphorylated form binds to CRKL and C3G. A mutant lacking the SH3 domain is phosphorylated upon CD3 cross-linking but not upon integrin beta-1 cross-linking. Tyrosine phosphorylation occurs upon stimulation of the G-protein coupled C1a calcitonin receptor. Calcitonin-stimulated tyrosine phosphorylation is mediated by calcium- and protein kinase C-dependent mechanisms and requires the integrity of the actin cytoskeleton. Phosphorylation at Ser-368 induces proteasomal degradation. Phosphorylated by LYN. Phosphorylation at Ser-779 by CSNK1D or CSNK1E, or phosphorylation of Thr-803 by CSNK1E enhances the interaction of NEDD9 with PLK1. Expressed in splenic lymphocytes (at protein level). Expressed in T-cells (at protein level). Expressed in the thymus. Expressed throughout the brain however particularly abundant in the cortex and hippocampus.

The protein localises to the cytoplasm. It localises to the cell cortex. It is found in the nucleus. The protein resides in the golgi apparatus. Its subcellular location is the cell projection. The protein localises to the lamellipodium. It localises to the cell junction. It is found in the focal adhesion. The protein resides in the cytoskeleton. Its subcellular location is the spindle pole. The protein localises to the cilium. It localises to the cilium basal body. It is found in the basolateral cell membrane. Its function is as follows. Scaffolding protein which plays a central coordinating role for tyrosine-kinase-based signaling related to cell adhesion. As a focal adhesion protein, plays a role in embryonic fibroblast migration. May play an important role in integrin beta-1 or B cell antigen receptor (BCR) mediated signaling in B- and T-cells. Integrin beta-1 stimulation leads to recruitment of various proteins including CRKl and SHPTP2 to the tyrosine phosphorylated form. Promotes adhesion and migration of lymphocytes; as a result required for the correct migration of lymphocytes to the spleen and other secondary lymphoid organs. Plays a role in the organization of T-cell F-actin cortical cytoskeleton and the centralization of T-cell receptor microclusters at the immunological synapse. Negatively regulates cilia outgrowth in polarized cysts. Modulates cilia disassembly via activation of AURKA-mediated phosphorylation of HDAC6 and subsequent deacetylation of alpha-tubulin. Positively regulates RANKL-induced osteoclastogenesis. Required for the maintenance of hippocampal dendritic spines in the dentate gyrus and CA1 regions, thereby involved in spatial learning and memory. This is Enhancer of filamentation 1 from Mus musculus (Mouse).